Reading from the N-terminus, the 433-residue chain is Histidinol dehydrogenase (433 aa).

NAD(+) is bound by residues Y133, Q194, and N217. Substrate is bound by residues S240, Q262, and H265. The Zn(2+) site is built by Q262 and H265. Residues E330 and H331 each act as proton acceptor in the active site. Positions 331, 364, 418, and 423 each coordinate substrate. Residue D364 coordinates Zn(2+). H423 serves as a coordination point for Zn(2+).

It belongs to the histidinol dehydrogenase family. The cofactor is Zn(2+).

The enzyme catalyses L-histidinol + 2 NAD(+) + H2O = L-histidine + 2 NADH + 3 H(+). The protein operates within amino-acid biosynthesis; L-histidine biosynthesis; L-histidine from 5-phospho-alpha-D-ribose 1-diphosphate: step 9/9. Catalyzes the sequential NAD-dependent oxidations of L-histidinol to L-histidinaldehyde and then to L-histidine. The sequence is that of Histidinol dehydrogenase from Hydrogenovibrio crunogenus (strain DSM 25203 / XCL-2) (Thiomicrospira crunogena).